We begin with the raw amino-acid sequence, 87 residues long: Protein Isd11 (87 aa).

Belongs to the complex I LYR family. In terms of assembly, interacts with IscS; the interaction enhances cysteine desulfurase activity of IscS. Component of a complex, at least composed of IscS, Isd11 and IscU.

The protein resides in the mitochondrion. It functions in the pathway cofactor biosynthesis; iron-sulfur cluster biosynthesis. Functionally, participates in iron-sulfur cluster formation (ISC) pathway for iron-sulfur (Fe-S) cluster biogenesis. Enhances cysteine desulfurase activity of IscS. This Plasmodium falciparum (isolate 3D7) protein is Protein Isd11.